Consider the following 445-residue polypeptide: tRNA modification GTPase MnmE (445 aa).

(6S)-5-formyl-5,6,7,8-tetrahydrofolate contacts are provided by Arg20, Glu79, and Lys119. The 157-residue stretch at 215-371 (GLKLAIIGPP…ILKNIEEIAE (157 aa)) folds into the TrmE-type G domain. Asn225 lines the K(+) pocket. Residues 225-230 (NAGKSS), 244-250 (SNIAGTT), and 269-272 (DTAG) contribute to the GTP site. Position 229 (Ser229) interacts with Mg(2+). 3 residues coordinate K(+): Ser244, Ile246, and Thr249. A Mg(2+)-binding site is contributed by Thr250. Lys445 lines the (6S)-5-formyl-5,6,7,8-tetrahydrofolate pocket.

The protein belongs to the TRAFAC class TrmE-Era-EngA-EngB-Septin-like GTPase superfamily. TrmE GTPase family. In terms of assembly, homodimer. Heterotetramer of two MnmE and two MnmG subunits. K(+) is required as a cofactor.

The protein resides in the cytoplasm. In terms of biological role, exhibits a very high intrinsic GTPase hydrolysis rate. Involved in the addition of a carboxymethylaminomethyl (cmnm) group at the wobble position (U34) of certain tRNAs, forming tRNA-cmnm(5)s(2)U34. The polypeptide is tRNA modification GTPase MnmE (Rickettsia bellii (strain RML369-C)).